Reading from the N-terminus, the 423-residue chain is Testin (423 aa).

Disordered regions lie at residues 1–21 (MSAT…ACAS) and 138–169 (EKQP…PSKC). The region spanning 97–204 (MILTNPVAAK…GDVKFPSEMN (108 aa)) is the PET domain. Residues 160 to 169 (PAHDQDPSKC) are compositionally biased toward basic and acidic residues. LIM zinc-binding domains follow at residues 236-299 (YSCY…CDSE), 301-361 (PRCA…NHAV), and 364-423 (QGCH…RMMS).

This sequence belongs to the prickle / espinas / testin family. Interacts via LIM domain 1 with ZYX. Interacts (via LIM domain 3) with ENAH and VASP. Interacts with ALKBH4, talin, actin, alpha-actinin, GRIP1 and PXN. Interacts (via LIM domain 2) with ACTL7A (via N-terminus). Heterodimer with ACTL7A; the heterodimer interacts with ENAH to form a heterotrimer. In terms of tissue distribution, detected at the acrosome of round spermatids (at protein level). Isoform TES1 transcript is highly expressed in adult testis and detected at low levels in other tissues. Isoform TES2 transcript is highly expressed in testis, kidney and spleen; intermediate in thymus, submaxillary gland and lung; detected at low levels in other tissues.

The protein localises to the cytoplasm. Its subcellular location is the cell junction. It is found in the focal adhesion. Functionally, scaffold protein that may play a role in cell adhesion, cell spreading and in the reorganization of the actin cytoskeleton. Plays a role in the regulation of cell proliferation. May act as a tumor suppressor. The protein is Testin (Tes) of Mus musculus (Mouse).